The following is a 129-amino-acid chain: uncharacterized protein (129 aa).

The tract at residues 1–129 (MGRMASPLRS…PARQSARMAR (129 aa)) is disordered. Over residues 18–46 (ESTRHKETSTVRVETSSHREETSSHRVET) the composition is skewed to basic and acidic residues. Positions 47–59 (SSRQVRTSSRQVE) are enriched in low complexity. Positions 70–97 (LTPSTKRLPQFLEVSSQHVETSSQCTET) are enriched in polar residues.

This is an uncharacterized protein from Mus musculus (Mouse).